The following is a 275-amino-acid chain: MEMO1 family protein Nmar_0215 (275 aa).

This sequence belongs to the MEMO1 family.

The polypeptide is MEMO1 family protein Nmar_0215 (Nitrosopumilus maritimus (strain SCM1)).